Consider the following 202-residue polypeptide: Ribosomal RNA small subunit methyltransferase G (202 aa).

Residues Gly-75, Phe-80, Val-125–Gln-126, and Arg-139 each bind S-adenosyl-L-methionine.

Belongs to the methyltransferase superfamily. RNA methyltransferase RsmG family.

It localises to the cytoplasm. Its function is as follows. Specifically methylates the N7 position of a guanine in 16S rRNA. This is Ribosomal RNA small subunit methyltransferase G from Mesomycoplasma hyopneumoniae (strain 232) (Mycoplasma hyopneumoniae).